The chain runs to 438 residues: MITMKNILKLRATGLLLLLLLMISVLGNGIGQAMAADRVYLDITAPETRKIKVAVPWFTNTGEGGMKARIAKDIADTVAKALKFHGIISIIPTSEYKGRQTADWAKLGADYAVLGSYKMFPKKIKLEIRLLDVAENNIILGKSYKGSMSQQNPMIFKFCDAAIKSLTGTEGIASSRIAFVSYEKRTKDVFMTDILGRRIRQVTRHNNLVVSPRFTRDGNFLSYSSYHSGSQKLYITDLRQAKITKSLSRRKGMNLAPTWAPDGKSCILTLSKYGAPDLFRINQQGKILEQLTSRAGVNVSPTYSADGRHIVFVSDRSGRPQLYLMELETKQTKRLTYDGRENAEPNWSPVENKIAYSSLRDGLYQIFTLDPFSAAPPKQLTSDLTRHESPVWSPDGNQILFTQYDGRRQQIYAIMKNGSYQRRVFSFPGSQSSARWAR.

Positions 1–35 (MITMKNILKLRATGLLLLLLLMISVLGNGIGQAMA) are cleaved as a signal peptide.

Belongs to the TolB family. The Tol-Pal system is composed of five core proteins: the inner membrane proteins TolA, TolQ and TolR, the periplasmic protein TolB and the outer membrane protein Pal. They form a network linking the inner and outer membranes and the peptidoglycan layer.

It is found in the periplasm. Part of the Tol-Pal system, which plays a role in outer membrane invagination during cell division and is important for maintaining outer membrane integrity. This is Tol-Pal system protein TolB from Desulfotalea psychrophila (strain LSv54 / DSM 12343).